Reading from the N-terminus, the 753-residue chain is Polyribonucleotide nucleotidyltransferase (753 aa).

The Mg(2+) site is built by aspartate 543 and aspartate 549. Residues 609–668 form the KH domain; that stretch reads PRITTVKIPVAKIGELIGPKGKNINALTEETGANISIEDDGTVFISAADGASAEAAIEKI. In terms of domain architecture, S1 motif spans 680–749; it reads GERFLGTVVK…NRGKISLVPV (70 aa).

This sequence belongs to the polyribonucleotide nucleotidyltransferase family. Mg(2+) is required as a cofactor.

The protein resides in the cytoplasm. It carries out the reaction RNA(n+1) + phosphate = RNA(n) + a ribonucleoside 5'-diphosphate. Functionally, involved in mRNA degradation. Catalyzes the phosphorolysis of single-stranded polyribonucleotides processively in the 3'- to 5'-direction. The chain is Polyribonucleotide nucleotidyltransferase from Corynebacterium glutamicum (strain ATCC 13032 / DSM 20300 / JCM 1318 / BCRC 11384 / CCUG 27702 / LMG 3730 / NBRC 12168 / NCIMB 10025 / NRRL B-2784 / 534).